A 696-amino-acid chain; its full sequence is Tensin-4 (696 aa).

The N-terminal stretch at 1–14 (MSSSLLAGGHMVSL) is a signal peptide. 3 disordered regions span residues 157-246 (LDGP…RAPQ), 271-344 (SLPH…CPAS), and 356-416 (LING…KDMQ). A compositionally biased stretch (polar residues) spans 192–203 (SSSNESLIFSGN). Serine 230 is subject to Phosphoserine. The span at 271–304 (SLPHSSLSSYPSSSRSLGSPASSSSSLHSLDRGS) shows a compositional bias: low complexity. Polar residues-rich tracts occupy residues 326 to 344 (QAVQ…CPAS) and 372 to 397 (PGHQ…SPSK). One can recognise an SH2 domain in the interval 429 to 536 (WFKPSITREQ…ALPCKLTIPQ (108 aa)). The PTB domain occupies 563–690 (CHTLYLSSVS…QVISLVTALL (128 aa)).

This sequence belongs to the PTEN phosphatase protein family. In terms of assembly, interacts (via SH2 domain) with Rho GTPase-activating protein DLC1 (via C-terminus); the interaction is independent of DLC1 tyrosine phosphorylation. Interacts with integrin ITGB1; the interaction displaces tensin TNS3 from the ITGB1 cytoplasmic tail and promotes ITGB1 stability. Interacts (via SH2 domain) with E3 ubiquitin-protein ligase CBL (phosphorylated on 'Tyr-780'); the interaction is enhanced in the presence of EGF and reduces interaction of CBL with EGFR. Interacts (via SH2 domain) with receptor tyrosine kinase MET (when phosphorylated); the interaction increases MET protein stability.

The protein localises to the cell junction. It localises to the focal adhesion. It is found in the cytoplasm. Its subcellular location is the cytoskeleton. Its function is as follows. Promotes EGF-induced cell migration by displacing tensin TNS3 from the cytoplasmic tail of integrin ITGB1 which results in dissociation of TNS3 from focal adhesions, disassembly of actin stress fibers and initiation of cell migration. Suppresses ligand-induced degradation of EGFR by reducing EGFR ubiquitination in the presence of EGF. Increases MET protein stability by inhibiting MET endocytosis and subsequent lysosomal degradation which leads to increased cell survival, proliferation and migration. This chain is Tensin-4 (Tns4), found in Mus musculus (Mouse).